The following is a 388-amino-acid chain: Acyl-CoA dehydrogenase fadE12 (388 aa).

This sequence belongs to the acyl-CoA dehydrogenase family. It depends on FAD as a cofactor.

The enzyme catalyses a 2,3-saturated acyl-CoA + A = a 2,3-dehydroacyl-CoA + AH2. This Mycobacterium bovis (strain ATCC BAA-935 / AF2122/97) protein is Acyl-CoA dehydrogenase fadE12 (fadE12).